Here is a 77-residue protein sequence, read N- to C-terminus: Protein AC145 (77 aa).

Its subcellular location is the host nucleus. It is found in the virion. Its function is as follows. Plays a role in primary oral infection of the host. The chain is Protein AC145 from Autographa californica nuclear polyhedrosis virus (AcMNPV).